The chain runs to 329 residues: MLPIPEELTTLISDLELYLADGLKGENLSKKAKEKREAFIKRIKEVKLSFPQDFKDKYAEDSEEEEDWDSNEGGSLQSERTDKDEEACEGAQQAPAVAAQDLTSVFKAGYLEKRRKDHSFFGTEWQKRWCALSGQTFYYYGSEKDKQQKGEFNIEGYRVKMNSSLRKDSKKDFCFEISATDKRSYMFCASSVKEAEEWVKQIDFVLKDMTGIIPEEEEEGQELYDDVGQMDEIYEVLPEEDMPSPPPKVEPVSKHPPPTPAVDKSTDYANYYQGLWDCMGDLPDELSFKRGDAIYILSREYQTFGWWVGEKNGQIGIVPKDYLMELYAL.

The tract at residues 58 to 95 (YAEDSEEEEDWDSNEGGSLQSERTDKDEEACEGAQQAP) is disordered. Positions 61–70 (DSEEEEDWDS) are enriched in acidic residues. The region spanning 104–207 (SVFKAGYLEK…WVKQIDFVLK (104 aa)) is the PH domain. Residues 240 to 263 (EDMPSPPPKVEPVSKHPPPTPAVD) are disordered. A compositionally biased stretch (pro residues) spans 243 to 260 (PSPPPKVEPVSKHPPPTP). Residues 267 to 328 (DYANYYQGLW…PKDYLMELYA (62 aa)) form the SH3 domain.

It belongs to the SKAP family. Phosphorylated on tyrosines.

The protein resides in the cytoplasm. Functionally, may be involved in B-cell and macrophage adhesion processes. May play a role in src signaling pathway. In Takifugu rubripes (Japanese pufferfish), this protein is Src kinase-associated phosphoprotein 2 (skap2).